A 110-amino-acid chain; its full sequence is Large ribosomal subunit protein eL34 (110 aa).

The disordered stretch occupies residues 1 to 41 (MKNVLIHKGATYKTRSNRRRKVRTPSGKLVNRRVKKHSKKH). Over residues 30–41 (VNRRVKKHSKKH) the composition is skewed to basic residues.

The protein belongs to the eukaryotic ribosomal protein eL34 family.

The polypeptide is Large ribosomal subunit protein eL34 (RPL34) (Encephalitozoon cuniculi (strain GB-M1) (Microsporidian parasite)).